Consider the following 133-residue polypeptide: Large-conductance mechanosensitive channel (133 aa).

A run of 2 helical transmembrane segments spans residues 10–30 (FAVK…AAFG) and 76–96 (GIFV…FLVV).

It belongs to the MscL family. In terms of assembly, homopentamer.

The protein resides in the cell inner membrane. In terms of biological role, channel that opens in response to stretch forces in the membrane lipid bilayer. May participate in the regulation of osmotic pressure changes within the cell. This is Large-conductance mechanosensitive channel from Chlorobium phaeobacteroides (strain BS1).